Here is a 602-residue protein sequence, read N- to C-terminus: Exopolysaccharide phosphotransferase SCO2594 (602 aa).

The disordered stretch occupies residues 251 to 271 (PRAGEDLDAGDGAAGGPRPGL).

It belongs to the stealth family.

The protein is Exopolysaccharide phosphotransferase SCO2594 of Streptomyces coelicolor (strain ATCC BAA-471 / A3(2) / M145).